Here is a 134-residue protein sequence, read N- to C-terminus: Cell division protein SepF 1 (134 aa).

It belongs to the SepF family. As to quaternary structure, homodimer. Interacts with FtsZ.

The protein resides in the cytoplasm. In terms of biological role, cell division protein that is part of the divisome complex and is recruited early to the Z-ring. Probably stimulates Z-ring formation, perhaps through the cross-linking of FtsZ protofilaments. Its function overlaps with FtsA. This is Cell division protein SepF 1 from Streptomyces avermitilis (strain ATCC 31267 / DSM 46492 / JCM 5070 / NBRC 14893 / NCIMB 12804 / NRRL 8165 / MA-4680).